We begin with the raw amino-acid sequence, 342 residues long: Holliday junction branch migration complex subunit RuvB (342 aa).

A large ATPase domain (RuvB-L) region spans residues 1-179; that stretch reads MTNILSPEKS…FGIPMRLNFY (179 aa). ATP is bound by residues isoleucine 18, arginine 19, glycine 60, lysine 63, threonine 64, threonine 65, 126–128, arginine 169, tyrosine 179, and arginine 216; that span reads EDF. Residue threonine 64 coordinates Mg(2+). The tract at residues 180-250 is small ATPAse domain (RuvB-S); it reads NTEELKQVLN…ICDFGLKRLT (71 aa). The tract at residues 253 to 342 is head domain (RuvB-H); that stretch reads SIGLDSNDYR…HQFNILNENE (90 aa). The DNA site is built by arginine 289, arginine 308, and arginine 313.

The protein belongs to the RuvB family. Homohexamer. Forms an RuvA(8)-RuvB(12)-Holliday junction (HJ) complex. HJ DNA is sandwiched between 2 RuvA tetramers; dsDNA enters through RuvA and exits via RuvB. An RuvB hexamer assembles on each DNA strand where it exits the tetramer. Each RuvB hexamer is contacted by two RuvA subunits (via domain III) on 2 adjacent RuvB subunits; this complex drives branch migration. In the full resolvosome a probable DNA-RuvA(4)-RuvB(12)-RuvC(2) complex forms which resolves the HJ.

The protein localises to the cytoplasm. It catalyses the reaction ATP + H2O = ADP + phosphate + H(+). Its function is as follows. The RuvA-RuvB-RuvC complex processes Holliday junction (HJ) DNA during genetic recombination and DNA repair, while the RuvA-RuvB complex plays an important role in the rescue of blocked DNA replication forks via replication fork reversal (RFR). RuvA specifically binds to HJ cruciform DNA, conferring on it an open structure. The RuvB hexamer acts as an ATP-dependent pump, pulling dsDNA into and through the RuvAB complex. RuvB forms 2 homohexamers on either side of HJ DNA bound by 1 or 2 RuvA tetramers; 4 subunits per hexamer contact DNA at a time. Coordinated motions by a converter formed by DNA-disengaged RuvB subunits stimulates ATP hydrolysis and nucleotide exchange. Immobilization of the converter enables RuvB to convert the ATP-contained energy into a lever motion, pulling 2 nucleotides of DNA out of the RuvA tetramer per ATP hydrolyzed, thus driving DNA branch migration. The RuvB motors rotate together with the DNA substrate, which together with the progressing nucleotide cycle form the mechanistic basis for DNA recombination by continuous HJ branch migration. Branch migration allows RuvC to scan DNA until it finds its consensus sequence, where it cleaves and resolves cruciform DNA. The sequence is that of Holliday junction branch migration complex subunit RuvB from Rickettsia typhi (strain ATCC VR-144 / Wilmington).